We begin with the raw amino-acid sequence, 281 residues long: Bifunctional protein FolD (281 aa).

NADP(+) contacts are provided by residues 164–166 (GRS) and Ser189.

Belongs to the tetrahydrofolate dehydrogenase/cyclohydrolase family. In terms of assembly, homodimer.

The catalysed reaction is (6R)-5,10-methylene-5,6,7,8-tetrahydrofolate + NADP(+) = (6R)-5,10-methenyltetrahydrofolate + NADPH. It catalyses the reaction (6R)-5,10-methenyltetrahydrofolate + H2O = (6R)-10-formyltetrahydrofolate + H(+). It functions in the pathway one-carbon metabolism; tetrahydrofolate interconversion. Catalyzes the oxidation of 5,10-methylenetetrahydrofolate to 5,10-methenyltetrahydrofolate and then the hydrolysis of 5,10-methenyltetrahydrofolate to 10-formyltetrahydrofolate. The chain is Bifunctional protein FolD from Enterococcus faecalis (strain ATCC 700802 / V583).